We begin with the raw amino-acid sequence, 305 residues long: Target of rapamycin complex subunit LST8-1 (305 aa).

WD repeat units follow at residues 1–30 (MSQP…CYRT), 33–71 (YPDS…PQPV), 76–115 (SHTN…CQKE), 117–156 (ESVA…CSCE), 160–199 (EVDT…QTMT), 209–248 (AHNG…LEKV), and 251–292 (GHQR…KVYQ).

This sequence belongs to the WD repeat LST8 family. In terms of assembly, the target of rapamycin complex 1 (TORC1) is composed of at least RAPTOR, LST8 and TOR. Interacts with TOR. As to expression, expressed in the root central cylinder, root tips, emerging lateral roots, vasculature of cotyledons, leaf stomata, leaf stipules, anthers, pollen, filaments, and vasculature of petals and sepals.

Its subcellular location is the endosome. Functionally, component of TORC1 complex, which is an essential cell growth regulator that controls plant development. Acts by activating transcription, protein synthesis and ribosome biogenesis, and inhibiting mRNA degradation and autophagy. Involved in regulating amino acid accumulation and the synthesis of myo-inositol and raffinose during plant adaptation to long days. Involved in the regulation of plant growth and abscisic acid (ABA) accumulation. Acts as a positive regulation of the ABA biosynthetic genes ZEP, NCED3 and AAO3, and negative regulator of the ABA catabolic genes CYP707A2 and CYP707A3. The sequence is that of Target of rapamycin complex subunit LST8-1 from Arabidopsis thaliana (Mouse-ear cress).